The following is a 436-amino-acid chain: Protein Z-dependent protease inhibitor (436 aa).

The first 20 residues, 1–20 (MRVVSSLFLPVLLAEVWLVS), serve as a signal peptide directing secretion. Residues N23, N42, and N69 are each glycosylated (N-linked (GlcNAc...) asparagine). Residues 128–145 (AGPLILPALFKRVKETFS) are heparin-binding. N172, N189, and N287 each carry an N-linked (GlcNAc...) asparagine glycan.

It belongs to the serpin family. Phosphorylated by FAM20C in the extracellular medium. In terms of tissue distribution, expressed by the liver and secreted in plasma.

It localises to the secreted. Inhibits activity of the coagulation protease factor Xa in the presence of PROZ, calcium and phospholipids. Also inhibits factor XIa in the absence of cofactors. The chain is Protein Z-dependent protease inhibitor (Serpina10) from Rattus norvegicus (Rat).